Here is a 91-residue protein sequence, read N- to C-terminus: Small ribosomal subunit protein uS19 (91 aa).

The protein belongs to the universal ribosomal protein uS19 family.

Its function is as follows. Protein S19 forms a complex with S13 that binds strongly to the 16S ribosomal RNA. The chain is Small ribosomal subunit protein uS19 from Erythrobacter litoralis (strain HTCC2594).